A 256-amino-acid chain; its full sequence is Small ribosomal subunit protein uS2 (256 aa).

Positions 104-149 (NFKTISQRVHRLEELEALFASPEIEERPKKEQVRLKHELERLQKYL) form a coiled coil.

Belongs to the universal ribosomal protein uS2 family. Part of the 30S ribosomal subunit. Contacts protein S8.

In terms of biological role, spans the head-body hinge region of the 30S subunit. Is loosely associated with the 30S subunit. The sequence is that of Small ribosomal subunit protein uS2 (rpsB) from Thermus thermophilus (strain ATCC BAA-163 / DSM 7039 / HB27).